Consider the following 718-residue polypeptide: DNA ligase (718 aa).

NAD(+) contacts are provided by residues Asp-34–Asp-38, Ser-83–Leu-84, and Glu-115. Residue Lys-117 is the N6-AMP-lysine intermediate of the active site. Arg-138, Glu-186, Lys-302, and Lys-326 together coordinate NAD(+). Residues Cys-420, Cys-423, Cys-438, and Cys-444 each contribute to the Zn(2+) site. In terms of domain architecture, BRCT spans Pro-604–Asn-694.

It belongs to the NAD-dependent DNA ligase family. LigA subfamily. Mg(2+) is required as a cofactor. Requires Mn(2+) as cofactor.

It carries out the reaction NAD(+) + (deoxyribonucleotide)n-3'-hydroxyl + 5'-phospho-(deoxyribonucleotide)m = (deoxyribonucleotide)n+m + AMP + beta-nicotinamide D-nucleotide.. In terms of biological role, DNA ligase that catalyzes the formation of phosphodiester linkages between 5'-phosphoryl and 3'-hydroxyl groups in double-stranded DNA using NAD as a coenzyme and as the energy source for the reaction. It is essential for DNA replication and repair of damaged DNA. The polypeptide is DNA ligase (Roseiflexus castenholzii (strain DSM 13941 / HLO8)).